The chain runs to 969 residues: RNA polymerase-associated protein RapA (969 aa).

The Helicase ATP-binding domain occupies 164-334; it reads EVGRRHAPRV…FARLRLLDAD (171 aa). 177–184 contacts ATP; sequence DEVGLGKT. The short motif at 280-283 is the DEAH box element; sequence DEAH. The Helicase C-terminal domain maps to 492–646; that stretch reads RVNWLLEKVK…TCPTGRAVYD (155 aa).

It belongs to the SNF2/RAD54 helicase family. RapA subfamily. Interacts with the RNAP. Has a higher affinity for the core RNAP than for the holoenzyme. Its ATPase activity is stimulated by binding to RNAP.

Transcription regulator that activates transcription by stimulating RNA polymerase (RNAP) recycling in case of stress conditions such as supercoiled DNA or high salt concentrations. Probably acts by releasing the RNAP, when it is trapped or immobilized on tightly supercoiled DNA. Does not activate transcription on linear DNA. Probably not involved in DNA repair. The protein is RNA polymerase-associated protein RapA of Vibrio cholerae serotype O1 (strain ATCC 39315 / El Tor Inaba N16961).